Here is a 2128-residue protein sequence, read N- to C-terminus: Spectrin beta chain, erythrocytic (2128 aa).

The span at 1-15 (MTSATEFENVGNQPP) shows a compositional bias: polar residues. The disordered stretch occupies residues 1–30 (MTSATEFENVGNQPPFSRINARWDAPDDEL). Positions 2–275 (TSATEFENVG…IITYVVAFYH (274 aa)) are actin-binding. The residue at position 36 (Ser-36) is a Phosphoserine. Calponin-homology (CH) domains follow at residues 54-158 (VVQK…LRFQ) and 173-278 (RSAK…HYFS). Thr-104 is modified (phosphothreonine). 17 Spectrin repeats span residues 303 to 411 (MIEK…LALR), 416 to 517 (RQEF…QRLE), 521 to 627 (ALQK…QLEQ), 630 to 733 (RLWK…DLQD), 736 to 838 (NFFQ…KLQE), 845 to 942 (VFGE…REAV), 950 to 1050 (NYCV…LSLG), 1054 to 1157 (KLQA…NTLT), 1162 to 1250 (FQEF…RHKK), 1267 to 1368 (ELQN…EQLS), 1381 to 1455 (ADLN…FLDL), 1473 to 1574 (LQIS…RLRD), 1576 to 1680 (HEAQ…RLEN), 1682 to 1784 (YHLF…MQLL), 1789 to 1890 (DLHR…RAQL), 1897 to 1997 (FRFF…DRLH), and 2004 to 2064 (QFSR…KPTT). A Phosphoserine modification is found at Ser-1289. The residue at position 2034 (Ser-2034) is a Phosphoserine. Residues 2062-2108 (PTTLELKERQTPERPTEEPGPQEEEGETAGEAPQVHHAATERTSPVS) form a disordered region. Phosphothreonine is present on residues Thr-2064, Thr-2072, and Thr-2101. Over residues 2066 to 2078 (ELKERQTPERPTE) the composition is skewed to basic and acidic residues. Ser-2105, Ser-2108, Ser-2114, Ser-2116, and Ser-2119 each carry phosphoserine.

The protein belongs to the spectrin family. In terms of assembly, composed of nonhomologous chains, alpha and beta, which aggregate to form dimers, tetramers, and higher polymers. Interacts with BCAM.

It localises to the cytoplasm. The protein resides in the cytoskeleton. It is found in the cell cortex. Functionally, spectrin is the major constituent of the cytoskeletal network underlying the erythrocyte plasma membrane. It associates with band 4.1 and actin to form the cytoskeletal superstructure of the erythrocyte plasma membrane. The polypeptide is Spectrin beta chain, erythrocytic (Sptb) (Mus musculus (Mouse)).